A 161-amino-acid polypeptide reads, in one-letter code: MGKRVVYPGTFDPPHYGHLDIVKRSARIFDEVVVAVAKKPRKFLLFDAEERVKMFEKMVEDIPNVEVKMFDCLLVDFMKREGINVIVRGVRLFTDFEYELQIALTNYKLAGVETVFMMPSQEYIHISSTIVRDVASYCGDLDNMVHPYVKQKLREKFNCGS.

T10 lines the substrate pocket. Residues 10–11 and H18 contribute to the ATP site; that span reads TF. Positions 42, 74, and 88 each coordinate substrate. ATP-binding positions include 89-91, E99, and 123-129; these read GVR and YIHISST.

This sequence belongs to the bacterial CoaD family. In terms of assembly, homohexamer. It depends on Mg(2+) as a cofactor.

The protein resides in the cytoplasm. It catalyses the reaction (R)-4'-phosphopantetheine + ATP + H(+) = 3'-dephospho-CoA + diphosphate. It participates in cofactor biosynthesis; coenzyme A biosynthesis; CoA from (R)-pantothenate: step 4/5. In terms of biological role, reversibly transfers an adenylyl group from ATP to 4'-phosphopantetheine, yielding dephospho-CoA (dPCoA) and pyrophosphate. The sequence is that of Phosphopantetheine adenylyltransferase from Aquifex aeolicus (strain VF5).